The sequence spans 388 residues: Muscleblind-like protein 1 (388 aa).

Threonine 6 carries the phosphothreonine modification. 4 C3H1-type zinc fingers span residues 13-41, 47-73, 179-207, and 215-241; these read WLTL…HPSK, NGRV…HPPP, TDRL…HPAD, and DNTV…HPPA.

The protein belongs to the muscleblind family. In terms of assembly, interacts with DDX1 and YBX1. Interacts with HNRNPH1; the interaction in RNA-independent. Interacts with RBPMS; the interaction allows cooperative assembly of RNA-bound stable cell-specific alternative splicing regulatory complexes. In terms of tissue distribution, highly expressed in cardiac, skeletal muscle and during myoblast differentiation. Weakly expressed in other tissues (at protein level). Expressed in heart, brain, placenta, lung, liver, skeletal muscle, kidney and pancreas.

The protein localises to the nucleus. It is found in the cytoplasm. Its subcellular location is the cytoplasmic granule. Functionally, mediates pre-mRNA alternative splicing regulation. Acts either as activator or repressor of splicing on specific pre-mRNA targets. Inhibits cardiac troponin-T (TNNT2) pre-mRNA exon inclusion but induces insulin receptor (IR) pre-mRNA exon inclusion in muscle. Antagonizes the alternative splicing activity pattern of CELF proteins. Regulates the TNNT2 exon 5 skipping through competition with U2AF2. Inhibits the formation of the spliceosome A complex on intron 4 of TNNT2 pre-mRNA. Binds to the stem-loop structure within the polypyrimidine tract of TNNT2 intron 4 during spliceosome assembly. Binds to the 5'-YGCU(U/G)Y-3'consensus sequence. Binds to the IR RNA. Binds to expanded CUG repeat RNA, which folds into a hairpin structure containing GC base pairs and bulged, unpaired U residues. Together with RNA binding proteins RBPMS and RBFOX2, activates vascular smooth muscle cells alternative splicing events. Regulates NCOR2 alternative splicing. This chain is Muscleblind-like protein 1 (MBNL1), found in Homo sapiens (Human).